The chain runs to 1395 residues: G-protein coupled receptor-associated sorting protein 1 (1395 aa).

Disordered stretches follow at residues 1-25 (MTGA…VVGG), 45-83 (QIMP…AKAI), and 269-288 (TNTW…FRSK). Residues 269-281 (TNTWSGPREDPNS) are compositionally biased toward basic and acidic residues. S297 carries the post-translational modification Phosphoserine. Residues 446 to 469 (SMGTGASSKSRPRTDGERIGDSLF) are disordered. A compositionally biased stretch (basic and acidic residues) spans 457-469 (PRTDGERIGDSLF). Phosphoserine occurs at positions 631 and 899. The segment at 899-1395 (SETEEETIFG…QNDPEGDQEN (497 aa)) is OPRD1-binding.

The protein belongs to the GPRASP family. As to quaternary structure, interacts with cytoplasmic tails of a variety of G-protein coupled receptors such as D2 dopamine receptor/DRD2, delta opioid receptor/OPRD1, beta-2 adrenergic receptor/ADRB2 and D4 dopamine receptor/DRD4. Interacts with PER1. Interacts with BECN2; the interaction is direct. As to expression, expressed in the brain, with lower expression in medulla, spinal cord and substantia nigra.

Its subcellular location is the cytoplasm. Modulates lysosomal sorting and functional down-regulation of a variety of G-protein coupled receptors. Targets receptors for degradation in lysosomes via its interaction with BECN2. This chain is G-protein coupled receptor-associated sorting protein 1 (GPRASP1), found in Homo sapiens (Human).